The primary structure comprises 1196 residues: FIP1[V]-like protein (1196 aa).

Disordered stretches follow at residues 1–102, 117–248, 268–300, 413–472, and 485–1174; these read MEED…TIPG, GVSQ…SHGY, GAASVGGPSSGQVRPPANLGPMAGRGRGDWRPL, GAQG…PRMR, and SHED…IEGP. Positions 18 to 31 are enriched in pro residues; sequence FQPPVVLPPPPPLP. Over residues 117–126 the composition is skewed to polar residues; that stretch reads GVSQVTTRIE. Gly residues predominate over residues 129–141; the sequence is VGGGGDGGYGGQG. 2 stretches are compositionally biased toward acidic residues: residues 142–154 and 179–190; these read EGDDWDSDSEDDL and NEDDDDEDDEDP. Residues 226–236 are compositionally biased toward gly residues; sequence AGKGSGPGGAT. Positions 268–278 are enriched in low complexity; it reads GAASVGGPSSG. A compositionally biased stretch (basic and acidic residues) spans 518 to 548; that stretch reads KRPDTESAEHSPAQDEPHKNLLKKQDDEISR. Polar residues predominate over residues 549–561; that stretch reads STDSGQSFRSSSP. Basic and acidic residues-rich tracts occupy residues 565-592 and 608-641; these read RGTRSSSVDREDVGGEAGKDAEMGEELK and GESKTERSSESSKARSGSHRDFQQEEDVIQDKHS. Polar residues predominate over residues 643–657; it reads RPANNRKQYDNNAPH. Composition is skewed to basic and acidic residues over residues 661 to 673, 699 to 802, 810 to 918, 925 to 945, and 953 to 971; these read KNQDRGKEMERTR, SRED…EKNE, SMSR…DTLR, RRDYPGEESSSHHRGHEDFSA, and NEKKPRQERTGAKIDKFID. Short sequence motifs (nuclear localization signal) lie at residues 704–711 and 734–741; these read DKRKERDV and RKRDREDD. The span at 998–1021 shows a compositional bias: polar residues; that stretch reads ESLSKQGEQNGSSVVTGSKGTNDA. Basic and acidic residues-rich tracts occupy residues 1046 to 1071, 1103 to 1137, and 1151 to 1163; these read DEIHDSKRGRTKLERWASHKEREDAV, KSRDVTEEKIGHDLADTKDGSEKGPGDRHLDTVEK, and TEKDTTGVKKMES.

This sequence belongs to the FIP1 family. As to quaternary structure, component of the cleavage and polyadenylation specificity factor (CPSF) complex. Forms a complex with cleavage and polyadenylation specificity factor (CPSF) subunits CFIS1, CFIS2, CPSF30, CSTF50, CSTF64, CSTF77, FIPS3, PABN1, PABN2, PABN3, PAPS4, CFIM25 and PABN1. Binds RNA. In terms of tissue distribution, expressed in leaves, stems, flower tissues and roots.

The protein resides in the nucleus. In terms of biological role, essential gene. Component of the cleavage and polyadenylation specificity factor (CPSF) complex that plays a key role in pre-mRNA 3'-end formation, recognizing the AAUAAA signal sequence and interacting with poly(A) polymerase and other factors to bring about cleavage and poly(A) addition. FIP1L1 contributes to poly(A) site recognition and stimulates poly(A) addition. Binds to U-rich RNA sequence elements surrounding the poly(A) site. May act to tether poly(A) polymerase to the CPSF complex. The chain is FIP1[V]-like protein from Arabidopsis thaliana (Mouse-ear cress).